The following is a 238-amino-acid chain: MRPNNRENNQPRQIKITRNYTKHAEGSVLVEFGDTKVLCTATVEDAVPRFLKGQGQGWVTAEYGMLPRSTHSRMQREAAKGKQGGRTMEIQRLIARSLRAMVDLKALGERAITLDCDVIQADGGTRTASITGAAVALCDAINGLIENGTLKTNPIKGLVSAISVGIVDGQAVCDLEYVEDSAAETDMNVVMMEDGRMIEVQGTAEGEPFSHEELLTLLDLAKQGCNQIFIAQREALGL.

Phosphate-binding positions include R86 and 124–126 (GTR).

It belongs to the RNase PH family. As to quaternary structure, homohexameric ring arranged as a trimer of dimers.

The catalysed reaction is tRNA(n+1) + phosphate = tRNA(n) + a ribonucleoside 5'-diphosphate. Phosphorolytic 3'-5' exoribonuclease that plays an important role in tRNA 3'-end maturation. Removes nucleotide residues following the 3'-CCA terminus of tRNAs; can also add nucleotides to the ends of RNA molecules by using nucleoside diphosphates as substrates, but this may not be physiologically important. Probably plays a role in initiation of 16S rRNA degradation (leading to ribosome degradation) during starvation. In Haemophilus influenzae (strain 86-028NP), this protein is Ribonuclease PH.